The sequence spans 511 residues: Coatomer subunit delta (511 aa).

The segment covering 167–177 has biased composition (basic and acidic residues); it reads QQARRDAERQG. The disordered stretch occupies residues 167–188; that stretch reads QQARRDAERQGKKAPGFGGFGS. Ser-223 bears the Phosphoserine mark. 2 positions are modified to N6-acetyllysine: Lys-233 and Lys-241. Position 244 is a phosphoserine (Ser-244). An MHD domain is found at 271-511; that stretch reads MESVHMKIEE…TFLVDKYEIL (241 aa). Residues Lys-309 and Lys-351 each carry the N6-acetyllysine modification. Ser-493 bears the Phosphoserine mark.

It belongs to the adaptor complexes medium subunit family. Delta-COP subfamily. Oligomeric complex that consists of at least the alpha, beta, beta', gamma, delta, epsilon and zeta subunits.

The protein resides in the cytoplasm. Its subcellular location is the golgi apparatus membrane. The protein localises to the cytoplasmic vesicle. It localises to the COPI-coated vesicle membrane. In terms of biological role, the coatomer is a cytosolic protein complex that binds to dilysine motifs and reversibly associates with Golgi non-clathrin-coated vesicles, which further mediate biosynthetic protein transport from the ER, via the Golgi up to the trans Golgi network. Coatomer complex is required for budding from Golgi membranes, and is essential for the retrograde Golgi-to-ER transport of dilysine-tagged proteins. In mammals, the coatomer can only be recruited by membranes associated to ADP-ribosylation factors (ARFs), which are small GTP-binding proteins; the complex also influences the Golgi structural integrity, as well as the processing, activity, and endocytic recycling of LDL receptors. This Pongo abelii (Sumatran orangutan) protein is Coatomer subunit delta (ARCN1).